A 62-amino-acid chain; its full sequence is Cytochrome b-c1 complex subunit 6-2, mitochondrial (62 aa).

Intrachain disulfides connect cysteine 17–cysteine 59 and cysteine 31–cysteine 45.

The protein belongs to the UQCRH/QCR6 family. As to quaternary structure, component of the ubiquinol-cytochrome c oxidoreductase (cytochrome b-c1 complex, complex III, CIII), a multisubunit enzyme composed of 10 subunits. The complex is composed of 3 respiratory subunits cytochrome b (MT-CYB), cytochrome c1 (CYC1-1 or CYC1-2) and Rieske protein (UCR1-1 or UCR1-2), 2 core protein subunits MPPalpha1 (or MPPalpha2) and MPPB, and 5 low-molecular weight protein subunits QCR7-1 (or QCR7-2), UCRQ-1 (or UCRQ-2), QCR9, UCRY and probably QCR6-1 (or QCR6-2). The complex exists as an obligatory dimer and forms supercomplexes (SCs) in the inner mitochondrial membrane with NADH-ubiquinone oxidoreductase (complex I, CI), resulting in different assemblies (supercomplexes SCI(1)III(2) and SCI(2)III(4)).

The protein resides in the mitochondrion inner membrane. In terms of biological role, component of the ubiquinol-cytochrome c oxidoreductase, a multisubunit transmembrane complex that is part of the mitochondrial electron transport chain which drives oxidative phosphorylation. The respiratory chain contains 3 multisubunit complexes succinate dehydrogenase (complex II, CII), ubiquinol-cytochrome c oxidoreductase (cytochrome b-c1 complex, complex III, CIII) and cytochrome c oxidase (complex IV, CIV), that cooperate to transfer electrons derived from NADH and succinate to molecular oxygen, creating an electrochemical gradient over the inner membrane that drives transmembrane transport and the ATP synthase. The cytochrome b-c1 complex catalyzes electron transfer from ubiquinol to cytochrome c, linking this redox reaction to translocation of protons across the mitochondrial inner membrane, with protons being carried across the membrane as hydrogens on the quinol. In the process called Q cycle, 2 protons are consumed from the matrix, 4 protons are released into the intermembrane space and 2 electrons are passed to cytochrome c. The protein is Cytochrome b-c1 complex subunit 6-2, mitochondrial (QCR6-2) of Arabidopsis thaliana (Mouse-ear cress).